A 507-amino-acid chain; its full sequence is Putative F-box/LRR-repeat protein At4g00320 (507 aa).

The 49-residue stretch at 12-60 (RDGISGLPDAMICHILSFLPTKVAASTTVLAKRWKPLLAFMPNLDFDES) folds into the F-box domain. 5 LRR repeats span residues 135–163 (RGFG…KIQF), 187–212 (YVKM…LLMN), 214–240 (IWKE…KFSR), 317–348 (ILYL…TIRT), and 349–374 (GVHI…VFEG).

This Arabidopsis thaliana (Mouse-ear cress) protein is Putative F-box/LRR-repeat protein At4g00320.